We begin with the raw amino-acid sequence, 689 residues long: Glycine--tRNA ligase beta subunit (689 aa).

This sequence belongs to the class-II aminoacyl-tRNA synthetase family. As to quaternary structure, tetramer of two alpha and two beta subunits.

Its subcellular location is the cytoplasm. It catalyses the reaction tRNA(Gly) + glycine + ATP = glycyl-tRNA(Gly) + AMP + diphosphate. In Acinetobacter baumannii (strain ACICU), this protein is Glycine--tRNA ligase beta subunit.